Here is an 80-residue protein sequence, read N- to C-terminus: Exodeoxyribonuclease 7 small subunit (80 aa).

This sequence belongs to the XseB family. As to quaternary structure, heterooligomer composed of large and small subunits.

It localises to the cytoplasm. It catalyses the reaction Exonucleolytic cleavage in either 5'- to 3'- or 3'- to 5'-direction to yield nucleoside 5'-phosphates.. Functionally, bidirectionally degrades single-stranded DNA into large acid-insoluble oligonucleotides, which are then degraded further into small acid-soluble oligonucleotides. This is Exodeoxyribonuclease 7 small subunit from Pseudomonas entomophila (strain L48).